A 79-amino-acid chain; its full sequence is Acyl carrier protein (79 aa).

The Carrier domain maps to 2–77 (SDTAERVKKI…DAIDFINQKT (76 aa)). At serine 37 the chain carries O-(pantetheine 4'-phosphoryl)serine.

It belongs to the acyl carrier protein (ACP) family. 4'-phosphopantetheine is transferred from CoA to a specific serine of apo-ACP by AcpS. This modification is essential for activity because fatty acids are bound in thioester linkage to the sulfhydryl of the prosthetic group.

It is found in the cytoplasm. The protein operates within lipid metabolism; fatty acid biosynthesis. Carrier of the growing fatty acid chain in fatty acid biosynthesis. This Rhodospirillum centenum (strain ATCC 51521 / SW) protein is Acyl carrier protein.